We begin with the raw amino-acid sequence, 525 residues long: Probable protein kinase UbiB (525 aa).

The 383-residue stretch at 118–500 (DFERVPVASA…QKRTNRLLQG (383 aa)) folds into the Protein kinase domain. ATP contacts are provided by residues 124-132 (VASASIAQV) and Lys150. The active-site Proton acceptor is Asp285. The chain crosses the membrane as a helical span at residues 501 to 521 (LLLFGVAVGVGAVLARAFLAL).

The protein belongs to the ABC1 family. UbiB subfamily.

Its subcellular location is the cell inner membrane. The protein operates within cofactor biosynthesis; ubiquinone biosynthesis [regulation]. In terms of biological role, is probably a protein kinase regulator of UbiI activity which is involved in aerobic coenzyme Q (ubiquinone) biosynthesis. The chain is Probable protein kinase UbiB from Paraburkholderia phytofirmans (strain DSM 17436 / LMG 22146 / PsJN) (Burkholderia phytofirmans).